Reading from the N-terminus, the 287-residue chain is Acetyl-coenzyme A carboxylase carboxyl transferase subunit beta (287 aa).

In terms of domain architecture, CoA carboxyltransferase N-terminal spans 33–287; the sequence is LFSKCPGCKH…TLLAFHGGQA (255 aa). The Zn(2+) site is built by cysteine 37, cysteine 40, cysteine 55, and cysteine 58. A C4-type zinc finger spans residues 37-58; it reads CPGCKHTIYQKDLGNDSVCPNC.

It belongs to the AccD/PCCB family. Acetyl-CoA carboxylase is a heterohexamer composed of biotin carboxyl carrier protein (AccB), biotin carboxylase (AccC) and two subunits each of ACCase subunit alpha (AccA) and ACCase subunit beta (AccD). Requires Zn(2+) as cofactor.

The protein resides in the cytoplasm. The enzyme catalyses N(6)-carboxybiotinyl-L-lysyl-[protein] + acetyl-CoA = N(6)-biotinyl-L-lysyl-[protein] + malonyl-CoA. The protein operates within lipid metabolism; malonyl-CoA biosynthesis; malonyl-CoA from acetyl-CoA: step 1/1. Functionally, component of the acetyl coenzyme A carboxylase (ACC) complex. Biotin carboxylase (BC) catalyzes the carboxylation of biotin on its carrier protein (BCCP) and then the CO(2) group is transferred by the transcarboxylase to acetyl-CoA to form malonyl-CoA. This is Acetyl-coenzyme A carboxylase carboxyl transferase subunit beta from Streptococcus sanguinis (strain SK36).